Here is a 356-residue protein sequence, read N- to C-terminus: Phosphate acyltransferase (356 aa).

This sequence belongs to the PlsX family. In terms of assembly, homodimer. Probably interacts with PlsY.

The protein resides in the cytoplasm. It catalyses the reaction a fatty acyl-[ACP] + phosphate = an acyl phosphate + holo-[ACP]. The protein operates within lipid metabolism; phospholipid metabolism. Catalyzes the reversible formation of acyl-phosphate (acyl-PO(4)) from acyl-[acyl-carrier-protein] (acyl-ACP). This enzyme utilizes acyl-ACP as fatty acyl donor, but not acyl-CoA. In Mesorhizobium japonicum (strain LMG 29417 / CECT 9101 / MAFF 303099) (Mesorhizobium loti (strain MAFF 303099)), this protein is Phosphate acyltransferase.